A 457-amino-acid polypeptide reads, in one-letter code: D-inositol 3-phosphate glycosyltransferase (457 aa).

Residue histidine 34 participates in 1D-myo-inositol 3-phosphate binding. Residues 40–41 (QP) and glycine 48 contribute to the UDP-N-acetyl-alpha-D-glucosamine site. Residues 45–50 (DAGGMN), lysine 103, tyrosine 136, threonine 160, and arginine 180 contribute to the 1D-myo-inositol 3-phosphate site. The UDP-N-acetyl-alpha-D-glucosamine site is built by arginine 267, lysine 272, and valine 333. 3 residues coordinate Mg(2+): phenylalanine 342, arginine 343, and alanine 345. UDP-N-acetyl-alpha-D-glucosamine is bound by residues glutamate 355 and glutamate 363. Threonine 369 is a binding site for Mg(2+).

It belongs to the glycosyltransferase group 1 family. MshA subfamily. Homodimer.

It carries out the reaction 1D-myo-inositol 3-phosphate + UDP-N-acetyl-alpha-D-glucosamine = 1D-myo-inositol 2-acetamido-2-deoxy-alpha-D-glucopyranoside 3-phosphate + UDP + H(+). Its function is as follows. Catalyzes the transfer of a N-acetyl-glucosamine moiety to 1D-myo-inositol 3-phosphate to produce 1D-myo-inositol 2-acetamido-2-deoxy-glucopyranoside 3-phosphate in the mycothiol biosynthesis pathway. This Streptomyces coelicolor (strain ATCC BAA-471 / A3(2) / M145) protein is D-inositol 3-phosphate glycosyltransferase.